The primary structure comprises 111 residues: Rubredoxin (111 aa).

The region spanning 11–62 (LDRFECRSCGYVYEPEKGDNKHDIAPETPFAELPINWRCPVCTAKKAAFTNI) is the Rubredoxin-like domain. Residues Cys16, Cys19, Cys49, and Cys52 each coordinate Fe cation.

Belongs to the rubredoxin family. Requires Fe(3+) as cofactor.

Its function is as follows. Rubredoxin is a small nonheme, iron protein lacking acid-labile sulfide. Its single Fe, chelated to 4 Cys, functions as an electron acceptor and may also stabilize the conformation of the molecule. Could be involved in hydrogenase-linked redox processes. The sequence is that of Rubredoxin (rub) from Nostoc sp. (strain PCC 7120 / SAG 25.82 / UTEX 2576).